A 199-amino-acid chain; its full sequence is MKQKIVLATGNKGKVREMSDVLADFGFEVVAQTDLDIESPEETGLTFVENALLKARYAAKVSGLPAIADDSGLVVEALNGAPGLYSARYAGIDGETADAENRRKLLRDLADVPVGKRQAKFVSCIVMLRHETDPSPIIAEGECIGEIIFAEKGENGFGYDSLFFTPEKGCTFAELETVEKKKISHRARALAVLKSKLGA.

Position 9 to 14 (9 to 14 (TGNKGK)) interacts with substrate. Mg(2+)-binding residues include Glu41 and Asp70. Asp70 serves as the catalytic Proton acceptor. Residues Ser71, 157–160 (FGYD), Lys180, and 185–186 (HR) each bind substrate.

This sequence belongs to the HAM1 NTPase family. As to quaternary structure, homodimer. Mg(2+) serves as cofactor.

It catalyses the reaction XTP + H2O = XMP + diphosphate + H(+). The enzyme catalyses dITP + H2O = dIMP + diphosphate + H(+). It carries out the reaction ITP + H2O = IMP + diphosphate + H(+). Functionally, pyrophosphatase that catalyzes the hydrolysis of nucleoside triphosphates to their monophosphate derivatives, with a high preference for the non-canonical purine nucleotides XTP (xanthosine triphosphate), dITP (deoxyinosine triphosphate) and ITP. Seems to function as a house-cleaning enzyme that removes non-canonical purine nucleotides from the nucleotide pool, thus preventing their incorporation into DNA/RNA and avoiding chromosomal lesions. This is dITP/XTP pyrophosphatase from Mannheimia succiniciproducens (strain KCTC 0769BP / MBEL55E).